We begin with the raw amino-acid sequence, 93 residues long: Cell division topological specificity factor (93 aa).

Belongs to the MinE family.

In terms of biological role, prevents the cell division inhibition by proteins MinC and MinD at internal division sites while permitting inhibition at polar sites. This ensures cell division at the proper site by restricting the formation of a division septum at the midpoint of the long axis of the cell. This chain is Cell division topological specificity factor, found in Agathobacter rectalis (strain ATCC 33656 / DSM 3377 / JCM 17463 / KCTC 5835 / VPI 0990) (Eubacterium rectale).